The sequence spans 103 residues: UPF0145 protein NT01CX_0170 (103 aa).

Belongs to the UPF0145 family.

The chain is UPF0145 protein NT01CX_0170 from Clostridium novyi (strain NT).